The sequence spans 508 residues: Photosystem II CP47 reaction center protein (508 aa).

A run of 6 helical transmembrane segments spans residues 21 to 36 (SVHI…WAGS), 101 to 115 (IVFS…IWHW), 140 to 156 (GIHL…FGAF), 203 to 218 (IAAG…FHLS), 237 to 252 (VLSS…AFVV), and 457 to 472 (SFAL…HGSR).

It belongs to the PsbB/PsbC family. PsbB subfamily. PSII is composed of 1 copy each of membrane proteins PsbA, PsbB, PsbC, PsbD, PsbE, PsbF, PsbH, PsbI, PsbJ, PsbK, PsbL, PsbM, PsbT, PsbX, PsbY, PsbZ, Psb30/Ycf12, at least 3 peripheral proteins of the oxygen-evolving complex and a large number of cofactors. It forms dimeric complexes. Binds multiple chlorophylls. PSII binds additional chlorophylls, carotenoids and specific lipids. serves as cofactor.

The protein localises to the plastid. The protein resides in the chloroplast thylakoid membrane. In terms of biological role, one of the components of the core complex of photosystem II (PSII). It binds chlorophyll and helps catalyze the primary light-induced photochemical processes of PSII. PSII is a light-driven water:plastoquinone oxidoreductase, using light energy to abstract electrons from H(2)O, generating O(2) and a proton gradient subsequently used for ATP formation. This chain is Photosystem II CP47 reaction center protein, found in Helianthus annuus (Common sunflower).